A 662-amino-acid chain; its full sequence is Threonine--tRNA ligase (662 aa).

The TGS domain maps to 1–64 (MSQSVSLTFP…ADGKIEIITR (64 aa)). The tract at residues 245–547 (DHRRLGREMD…LIENFAGHMP (303 aa)) is catalytic. Residues Cys-341, His-392, and His-524 each coordinate Zn(2+).

The protein belongs to the class-II aminoacyl-tRNA synthetase family. Homodimer. It depends on Zn(2+) as a cofactor.

It localises to the cytoplasm. The enzyme catalyses tRNA(Thr) + L-threonine + ATP = L-threonyl-tRNA(Thr) + AMP + diphosphate + H(+). Functionally, catalyzes the attachment of threonine to tRNA(Thr) in a two-step reaction: L-threonine is first activated by ATP to form Thr-AMP and then transferred to the acceptor end of tRNA(Thr). Also edits incorrectly charged L-seryl-tRNA(Thr). The protein is Threonine--tRNA ligase of Rhizobium rhizogenes (strain K84 / ATCC BAA-868) (Agrobacterium radiobacter).